Here is an 87-residue protein sequence, read N- to C-terminus: Small ribosomal subunit protein uS15 (87 aa).

The segment at 1-22 (MSEINKAEIVASNARAPSDTGS) is disordered.

Belongs to the universal ribosomal protein uS15 family. As to quaternary structure, part of the 30S ribosomal subunit. Forms a bridge to the 50S subunit in the 70S ribosome, contacting the 23S rRNA.

Its function is as follows. One of the primary rRNA binding proteins, it binds directly to 16S rRNA where it helps nucleate assembly of the platform of the 30S subunit by binding and bridging several RNA helices of the 16S rRNA. Forms an intersubunit bridge (bridge B4) with the 23S rRNA of the 50S subunit in the ribosome. This Leptothrix cholodnii (strain ATCC 51168 / LMG 8142 / SP-6) (Leptothrix discophora (strain SP-6)) protein is Small ribosomal subunit protein uS15.